A 248-amino-acid chain; its full sequence is Sugar fermentation stimulation protein homolog (248 aa).

This sequence belongs to the SfsA family.

This chain is Sugar fermentation stimulation protein homolog, found in Methylorubrum extorquens (strain CM4 / NCIMB 13688) (Methylobacterium extorquens).